The primary structure comprises 346 residues: Very-long-chain 3-oxoacyl-CoA reductase (346 aa).

The chain crosses the membrane as a helical span at residues 19–39; the sequence is VLLGALLVGVFKLTVFILSVT. Residues Val65, Asp119, Asn146, Tyr220, Lys224, Val253, and Ser255 each coordinate NADP(+). Tyr220 serves as the catalytic Proton donor. The active-site Lowers pKa of active site Tyr is Lys224.

It belongs to the short-chain dehydrogenases/reductases (SDR) family.

It is found in the endoplasmic reticulum membrane. It catalyses the reaction a very-long-chain (3R)-3-hydroxyacyl-CoA + NADP(+) = a very-long-chain 3-oxoacyl-CoA + NADPH + H(+). It participates in lipid metabolism; fatty acid biosynthesis. Its function is as follows. Component of the microsomal membrane bound fatty acid elongation system, which produces the 26-carbon very long-chain fatty acids (VLCFA) from palmitate. Catalyzes the reduction of the 3-ketoacyl-CoA intermediate that is formed in each cycle of fatty acid elongation. VLCFAs serve as precursors for ceramide and sphingolipids. The polypeptide is Very-long-chain 3-oxoacyl-CoA reductase (Scheffersomyces stipitis (strain ATCC 58785 / CBS 6054 / NBRC 10063 / NRRL Y-11545) (Yeast)).